The sequence spans 435 residues: WD repeat domain phosphoinositide-interacting protein 2 (435 aa).

Residues 182-222 (AHDSPLAALAFDASGTKLATASEKGTVIRVFSIPEGQKLFE) form a WD 1 repeat. A L/FRRG motif motif is present at residues 223-226 (FRRG). WD repeat units lie at residues 228 to 267 (KRCV…EKPP) and 311 to 349 (GHKN…GGEC). Residues 386 to 435 (VTKTYPPPSPTRHAYADDLGAVGGASEEDEMGNLRLDEDNENPPMILQTE) are disordered.

It belongs to the WD repeat PROPPIN family.

It localises to the preautophagosomal structure membrane. Its function is as follows. Component of the autophagy machinery that controls the major intracellular degradation process by which cytoplasmic materials are packaged into autophagosomes and delivered to lysosomes for degradation. Involved in an early step of the formation of preautophagosomal structures. The chain is WD repeat domain phosphoinositide-interacting protein 2 (wipi2) from Xenopus laevis (African clawed frog).